A 137-amino-acid polypeptide reads, in one-letter code: Small ribosomal subunit protein uS11 (137 aa).

2 disordered regions span residues 1 to 32 (MPPK…AHIK) and 118 to 137 (ISDV…RRRV). Over residues 12-21 (KTQKSRRRDK) the composition is skewed to basic residues.

Belongs to the universal ribosomal protein uS11 family. In terms of assembly, part of the 30S ribosomal subunit. Interacts with proteins S7 and S18. Binds to IF-3.

Its function is as follows. Located on the platform of the 30S subunit, it bridges several disparate RNA helices of the 16S rRNA. Forms part of the Shine-Dalgarno cleft in the 70S ribosome. The protein is Small ribosomal subunit protein uS11 of Nocardia farcinica (strain IFM 10152).